A 100-amino-acid polypeptide reads, in one-letter code: MALRKFVEDLLTVDLLARYLYRSVFHLFYEMTWYMRYLGAEFVIQCCSLHLISKLSSLIDIFICRFCYFNSLEFIPCALPGLASKAINNIATIASERSRP.

This is an uncharacterized protein from Saccharomyces cerevisiae (strain ATCC 204508 / S288c) (Baker's yeast).